A 367-amino-acid chain; its full sequence is Methylthioribose-1-phosphate isomerase (367 aa).

Asp250 (proton donor) is an active-site residue.

This sequence belongs to the eIF-2B alpha/beta/delta subunits family. MtnA subfamily.

Its subcellular location is the cytoplasm. It localises to the nucleus. It catalyses the reaction 5-(methylsulfanyl)-alpha-D-ribose 1-phosphate = 5-(methylsulfanyl)-D-ribulose 1-phosphate. The protein operates within amino-acid biosynthesis; L-methionine biosynthesis via salvage pathway; L-methionine from S-methyl-5-thio-alpha-D-ribose 1-phosphate: step 1/6. Catalyzes the interconversion of methylthioribose-1-phosphate (MTR-1-P) into methylthioribulose-1-phosphate (MTRu-1-P). This chain is Methylthioribose-1-phosphate isomerase (IDI2), found in Hordeum vulgare (Barley).